Here is a 344-residue protein sequence, read N- to C-terminus: Phenylalanine--tRNA ligase alpha subunit (344 aa).

Glutamate 256 is a Mg(2+) binding site.

It belongs to the class-II aminoacyl-tRNA synthetase family. Phe-tRNA synthetase alpha subunit type 1 subfamily. As to quaternary structure, tetramer of two alpha and two beta subunits. Requires Mg(2+) as cofactor.

It is found in the cytoplasm. The catalysed reaction is tRNA(Phe) + L-phenylalanine + ATP = L-phenylalanyl-tRNA(Phe) + AMP + diphosphate + H(+). This chain is Phenylalanine--tRNA ligase alpha subunit, found in Anoxybacillus flavithermus (strain DSM 21510 / WK1).